Here is a 178-residue protein sequence, read N- to C-terminus: Aspartate carbamoyltransferase regulatory chain (178 aa).

Residues 1-15 (MNDREPNQKESKESV) are compositionally biased toward basic and acidic residues. Residues 1–23 (MNDREPNQKESKESVNDAVPRAR) form a disordered region. Positions 133, 138, 159, and 162 each coordinate Zn(2+).

This sequence belongs to the PyrI family. In terms of assembly, contains catalytic and regulatory chains. Zn(2+) is required as a cofactor.

In terms of biological role, involved in allosteric regulation of aspartate carbamoyltransferase. The polypeptide is Aspartate carbamoyltransferase regulatory chain (Haloquadratum walsbyi (strain DSM 16790 / HBSQ001)).